Here is a 324-residue protein sequence, read N- to C-terminus: Bis(5'-nucleosyl)-tetraphosphatase, symmetrical (324 aa).

The tract at residues 269 to 324 (PGREVTAPATAPRAPRRPRERQGRQRARGGRGGGNGNGNGGNAAAPAAAPGDAPQE) is disordered. Positions 282 to 297 (APRRPRERQGRQRARG) are enriched in basic residues. Positions 298–309 (GRGGGNGNGNGG) are enriched in gly residues. Residues 310 to 324 (NAAAPAAAPGDAPQE) are compositionally biased toward low complexity.

The protein belongs to the Ap4A hydrolase family.

It carries out the reaction P(1),P(4)-bis(5'-adenosyl) tetraphosphate + H2O = 2 ADP + 2 H(+). In terms of biological role, hydrolyzes diadenosine 5',5'''-P1,P4-tetraphosphate to yield ADP. This is Bis(5'-nucleosyl)-tetraphosphatase, symmetrical from Xanthomonas campestris pv. campestris (strain ATCC 33913 / DSM 3586 / NCPPB 528 / LMG 568 / P 25).